Here is a 148-residue protein sequence, read N- to C-terminus: Putative nickel-responsive regulator (148 aa).

His88, His99, His101, and Cys107 together coordinate Ni(2+).

Belongs to the transcriptional regulatory CopG/NikR family. It depends on Ni(2+) as a cofactor.

Its function is as follows. Transcriptional regulator. The protein is Putative nickel-responsive regulator of Helicobacter pylori (strain P12).